The following is a 284-amino-acid chain: Phospholipid phosphatase 1 (284 aa).

The Cytoplasmic portion of the chain corresponds to 1–6; it reads MFDKTR. Positions 5–7 match the PDZ-binding; involved in localization to the apical cell membrane motif; the sequence is TRL. Residues 7–27 form a helical membrane-spanning segment; sequence LPYVALDVLCVLLAGLPFAIL. The Extracellular portion of the chain corresponds to 28-53; the sequence is TSRHTPFQRGVFCNDESIKYPYKEDT. A helical membrane pass occupies residues 54-74; sequence IPYALLGGIIIPFSIIVIILG. Over 75–94 the chain is Cytoplasmic; it reads ETLSVYCNLLHSNSFIRNNY. A helical transmembrane segment spans residues 95 to 115; sequence IATIYKAIGTFLFGAAASQSL. The Extracellular segment spans residues 116–164; the sequence is TDIAKYSIGRLRPHFLDVCDPDWSKINCSDGYIEYYICRGNAERVKEGR. Residues 120–128 form a phosphatase sequence motif I region; the sequence is KYSIGRLRP. N-linked (GlcNAc...) asparagine glycosylation is present at N142. A helical membrane pass occupies residues 165-185; the sequence is LSFYSGHSSFSMYCMLFVALY. Residues 168–171 form a phosphatase sequence motif II region; that stretch reads YSGH. The Proton donors role is filled by H171. The Cytoplasmic portion of the chain corresponds to 186 to 199; sequence LQARMKGDWARLLR. Residues 200–220 form a helical membrane-spanning segment; the sequence is PTLQFGLVAVSIYVGLSRVSD. Residues 216-227 are phosphatase sequence motif III; it reads SRVSDYKHHWSD. Topologically, residues 221–229 are extracellular; it reads YKHHWSDVL. The active-site Nucleophile is the H223. A helical transmembrane segment spans residues 230–250; that stretch reads TGLIQGALVAILVAVYVSDFF. The Cytoplasmic portion of the chain corresponds to 251 to 284; the sequence is KERTSFKERKEEDSHTTLHETPTTGNHYPSNHQP. The tract at residues 260–284 is disordered; sequence KEEDSHTTLHETPTTGNHYPSNHQP. Residues 269 to 284 show a composition bias toward polar residues; sequence HETPTTGNHYPSNHQP.

Belongs to the PA-phosphatase related phosphoesterase family. Forms functional homodimers and homooligomers that are not required for substrate recognition and catalytic activity. Can also form heterooligomers with PLPP2 and PLPP3. N-glycosylated. N-linked sugars are of the complex type. N-glycosylation is not required for the phosphatase activity. In terms of tissue distribution, widely expressed with highest expression found in prostate. Found to be down-regulated in colon adenocarcinomas. Predominant in kidney, lung, placenta and liver. As to expression, predominant in heart and pancreas.

The protein resides in the cell membrane. It localises to the apical cell membrane. The protein localises to the membrane raft. Its subcellular location is the membrane. It is found in the caveola. The catalysed reaction is a 1,2-diacyl-sn-glycero-3-phosphate + H2O = a 1,2-diacyl-sn-glycerol + phosphate. It catalyses the reaction 1,2-dihexadecanoyl-sn-glycero-3-phosphate + H2O = 1,2-dihexadecanoyl-sn-glycerol + phosphate. The enzyme catalyses 1,2-di-(9Z-octadecenoyl)-sn-glycero-3-phosphate + H2O = 1,2-di-(9Z-octadecenoyl)-sn-glycerol + phosphate. It carries out the reaction a monoacyl-sn-glycero-3-phosphate + H2O = a monoacylglycerol + phosphate. The catalysed reaction is (9Z)-octadecenoyl-sn-glycero-3-phosphate + H2O = (9Z-octadecenoyl)-glycerol + phosphate. It catalyses the reaction a 1-acyl-sn-glycero-3-phosphate + H2O = a 1-acyl-sn-glycerol + phosphate. The enzyme catalyses 1-(9Z-octadecenoyl)-sn-glycero-3-phosphate + H2O = 1-(9Z-octadecenoyl)-sn-glycerol + phosphate. It carries out the reaction a 1,2-diacyl-sn-glycerol 3-diphosphate + H2O = a 1,2-diacyl-sn-glycero-3-phosphate + phosphate + H(+). The catalysed reaction is sphing-4-enine 1-phosphate + H2O = sphing-4-enine + phosphate. It catalyses the reaction an N-acylsphing-4-enine 1-phosphate + H2O = an N-acylsphing-4-enine + phosphate. The enzyme catalyses N-(octanoyl)-sphing-4-enine-1-phosphate + H2O = N-octanoylsphing-4-enine + phosphate. It carries out the reaction N-(9Z-octadecenoyl)-ethanolamine phosphate + H2O = N-(9Z-octadecenoyl) ethanolamine + phosphate. The catalysed reaction is 1-hexadecanoyl-2-(9Z-octadecenoyl)-sn-glycero-3-phosphate + H2O = 1-hexadecanoyl-2-(9Z-octadecenoyl)-sn-glycerol + phosphate. Its pathway is lipid metabolism; phospholipid metabolism. With respect to regulation, magnesium-independent phospholipid phosphatase. Insensitive to N-ethylmaleimide. Inhibited by sphingosine, zinc ions and modestly by propanolol. Inhibited by vanadate. In terms of biological role, magnesium-independent phospholipid phosphatase of the plasma membrane that catalyzes the dephosphorylation of a variety of glycerolipid and sphingolipid phosphate esters including phosphatidate/PA, lysophosphatidate/LPA, diacylglycerol pyrophosphate/DGPP, sphingosine 1-phosphate/S1P and ceramide 1-phosphate/C1P. Also acts on N-oleoyl ethanolamine phosphate/N-(9Z-octadecenoyl)-ethanolamine phosphate, a potential physiological compound. Through its extracellular phosphatase activity allows both the hydrolysis and the cellular uptake of these bioactive lipid mediators from the milieu, regulating signal transduction in different cellular processes. It is for instance essential for the extracellular hydrolysis of S1P and subsequent conversion into intracellular S1P. Involved in the regulation of inflammation, platelets activation, cell proliferation and migration among other processes. May also have an intracellular activity to regulate phospholipid-mediated signaling pathways. In Homo sapiens (Human), this protein is Phospholipid phosphatase 1.